Consider the following 242-residue polypeptide: ATP synthase subunit a, chloroplastic (242 aa).

5 helical membrane passes run 34 to 54 (GQVL…AVLG), 93 to 113 (VPFI…GAII), 132 to 152 (INTT…AGLS), 188 to 210 (LFGN…PLVI), and 222 to 242 (GSVQ…EALE).

Belongs to the ATPase A chain family. In terms of assembly, F-type ATPases have 2 components, CF(1) - the catalytic core - and CF(0) - the membrane proton channel. CF(1) has five subunits: alpha(3), beta(3), gamma(1), delta(1), epsilon(1). CF(0) has four main subunits: a, b, b' and c.

It is found in the plastid. The protein resides in the chloroplast thylakoid membrane. Functionally, key component of the proton channel; it plays a direct role in the translocation of protons across the membrane. This Trieres chinensis (Marine centric diatom) protein is ATP synthase subunit a, chloroplastic.